We begin with the raw amino-acid sequence, 37 residues long: Large ribosomal subunit protein bL36 (37 aa).

Belongs to the bacterial ribosomal protein bL36 family.

This is Large ribosomal subunit protein bL36 from Gloeobacter violaceus (strain ATCC 29082 / PCC 7421).